Reading from the N-terminus, the 107-residue chain is Large ribosomal subunit protein uL24 (107 aa).

It belongs to the universal ribosomal protein uL24 family. As to quaternary structure, part of the 50S ribosomal subunit.

In terms of biological role, one of two assembly initiator proteins, it binds directly to the 5'-end of the 23S rRNA, where it nucleates assembly of the 50S subunit. Functionally, one of the proteins that surrounds the polypeptide exit tunnel on the outside of the subunit. The protein is Large ribosomal subunit protein uL24 of Mesomycoplasma hyopneumoniae (strain J / ATCC 25934 / NCTC 10110) (Mycoplasma hyopneumoniae).